A 236-amino-acid chain; its full sequence is Small ribosomal subunit protein uS2c (236 aa).

It belongs to the universal ribosomal protein uS2 family.

The protein resides in the plastid. The protein localises to the chloroplast. In Lotus japonicus (Lotus corniculatus var. japonicus), this protein is Small ribosomal subunit protein uS2c (rps2).